The chain runs to 180 residues: Large ribosomal subunit protein uL5 (180 aa).

The protein belongs to the universal ribosomal protein uL5 family. As to quaternary structure, part of the 50S ribosomal subunit; part of the 5S rRNA/L5/L18/L25 subcomplex. Contacts the 5S rRNA and the P site tRNA. Forms a bridge to the 30S subunit in the 70S ribosome.

In terms of biological role, this is one of the proteins that bind and probably mediate the attachment of the 5S RNA into the large ribosomal subunit, where it forms part of the central protuberance. In the 70S ribosome it contacts protein S13 of the 30S subunit (bridge B1b), connecting the 2 subunits; this bridge is implicated in subunit movement. Contacts the P site tRNA; the 5S rRNA and some of its associated proteins might help stabilize positioning of ribosome-bound tRNAs. This Polynucleobacter asymbioticus (strain DSM 18221 / CIP 109841 / QLW-P1DMWA-1) (Polynucleobacter necessarius subsp. asymbioticus) protein is Large ribosomal subunit protein uL5.